The sequence spans 445 residues: GTPase Der (445 aa).

2 EngA-type G domains span residues 3–167 (PVIA…NLPD) and 180–353 (IKLA…ASAN). Residues 9 to 16 (GRPNVGKS), 56 to 60 (DTGGF), 119 to 122 (NKAE), 186 to 193 (GRPNVGKS), 233 to 237 (DTAGL), and 298 to 301 (NKWD) each bind GTP. The region spanning 354–438 (RKMSTPVLTR…PLRIQLKSSV (85 aa)) is the KH-like domain.

Belongs to the TRAFAC class TrmE-Era-EngA-EngB-Septin-like GTPase superfamily. EngA (Der) GTPase family. As to quaternary structure, associates with the 50S ribosomal subunit.

Functionally, GTPase that plays an essential role in the late steps of ribosome biogenesis. The chain is GTPase Der from Polaromonas naphthalenivorans (strain CJ2).